Consider the following 523-residue polypeptide: Acetyl-coenzyme A carboxylase carboxyl transferase subunit beta, chloroplastic (523 aa).

The CoA carboxyltransferase N-terminal domain maps to 224 to 523 (FWVICENCHK…FVPSNQNSIK (300 aa)). Zn(2+)-binding residues include C228, C231, C247, and C250. A C4-type zinc finger spans residues 228–250 (CENCHKFNYKRLFKSKMNICEEC).

It belongs to the AccD/PCCB family. As to quaternary structure, acetyl-CoA carboxylase is a heterohexamer composed of biotin carboxyl carrier protein, biotin carboxylase and 2 subunits each of ACCase subunit alpha and ACCase plastid-coded subunit beta (accD). Zn(2+) serves as cofactor.

It is found in the plastid. The protein localises to the chloroplast stroma. It catalyses the reaction N(6)-carboxybiotinyl-L-lysyl-[protein] + acetyl-CoA = N(6)-biotinyl-L-lysyl-[protein] + malonyl-CoA. It participates in lipid metabolism; malonyl-CoA biosynthesis; malonyl-CoA from acetyl-CoA: step 1/1. Functionally, component of the acetyl coenzyme A carboxylase (ACC) complex. Biotin carboxylase (BC) catalyzes the carboxylation of biotin on its carrier protein (BCCP) and then the CO(2) group is transferred by the transcarboxylase to acetyl-CoA to form malonyl-CoA. This is Acetyl-coenzyme A carboxylase carboxyl transferase subunit beta, chloroplastic from Cucumis sativus (Cucumber).